Reading from the N-terminus, the 378-residue chain is MRVGAEYQARIPDFEPGATKYTDKDNGGMLVWSPYHNIPDAKLDEYIAIAKEKHGYNVEQALGMLFWHKHNIEKSLADLPNFTPFPDEWTVEDKVLFEQAFSFHGKSFHRIQQMLPDKTIASLVKYYYSWKKTRSRTSLMDRQARKLANRNNQGDSDDDVEEPHPMDGNDSDYDPKKEAKKEGNNEQPVQTSKIGLGRREYQSLQHRHHSQRSKCRPPKGMYLTQEDVIAVSCSPNAANTILRRLDMELISLKRQVQNAKQVNSALKQKMEGGIEEFKPPESNQKINARWTTEEQLLAVQGAKHSDHSVFRPFTSSTGICSSSHRSHSNFKSATPVTASSTSCCSCSPPSASAAPTTGAIYSAKANPKSASPTAHPPS.

In terms of domain architecture, ELM2 spans 1 to 83 (MRVGAEYQAR…KSLADLPNFT (83 aa)). Positions 84–135 (PFPDEWTVEDKVLFEQAFSFHGKSFHRIQQMLPDKTIASLVKYYYSWKKTRS) constitute an SANT domain. The segment at 147–219 (LANRNNQGDS…SQRSKCRPPK (73 aa)) is disordered. Residues 162–184 (EPHPMDGNDSDYDPKKEAKKEGN) are compositionally biased toward basic and acidic residues. Basic residues predominate over residues 205–217 (QHRHHSQRSKCRP). Positions 238–273 (ANTILRRLDMELISLKRQVQNAKQVNSALKQKMEGG) form a coiled coil. The interval 337–356 (TASSTSCCSCSPPSASAAPT) is disordered.

Belongs to the CoREST family.

It is found in the nucleus. Its function is as follows. May act as a component of a corepressor complex that represses transcription. The protein is REST corepressor 3 (RCOR3) of Gallus gallus (Chicken).